A 395-amino-acid polypeptide reads, in one-letter code: Thyroid hormone receptor beta (395 aa).

The interval 1 to 31 is modulating; it reads MSEPAENCSPRWKDEAIQNGYIPSYLDKDEL. Cysteine 32, cysteine 35, cysteine 49, cysteine 52, cysteine 70, cysteine 76, cysteine 86, and cysteine 89 together coordinate Zn(2+). 2 NR C4-type zinc fingers span residues 32–52 and 70–94; these read CVVCGDKATGYHYRCITCEGC and CKYEGKCVIDKVTRNQCQECRFKKC. The segment at residues 32 to 99 is a DNA-binding region (nuclear receptor); it reads CVVCGDKATG…RFKKCIAVGM (68 aa). The 254-residue stretch at 142 to 395 folds into the NR LBD domain; it reads EEWDLIRMVT…PPLFLEVFED (254 aa). 3 residues coordinate 3,3',5-triiodo-L-thyronine: arginine 216, asparagine 265, and histidine 369. The L-thyroxine site is built by arginine 216, asparagine 265, and histidine 369.

Belongs to the nuclear hormone receptor family. NR1 subfamily.

The protein localises to the nucleus. In terms of biological role, nuclear hormone receptor that can act as a repressor or activator of transcription. High affinity receptor for thyroid hormones, including triiodothyronine and thyroxine. The protein is Thyroid hormone receptor beta (thrb) of Paralichthys olivaceus (Bastard halibut).